Consider the following 387-residue polypeptide: uncharacterized protein (387 aa).

Disordered regions lie at residues 1 to 126, 138 to 169, and 275 to 298; these read MDGR…GDDE, GNQG…RNEE, and SSIF…AGNK. A compositionally biased stretch (basic and acidic residues) spans 32–45; it reads SSDHRTSNSAESKK. Composition is skewed to polar residues over residues 49-63 and 78-93; these read SGKS…NNDN and DLSS…SKGT. Basic and acidic residues predominate over residues 155–169; that stretch reads ENGKNDIEKNNRNEE. A compositionally biased stretch (polar residues) spans 275–296; the sequence is SSIFSDSQAVTTDDEGISSTAG.

Belongs to the ThrE exporter (TC 2.A.79) family.

This is an uncharacterized protein from Saccharomyces cerevisiae (strain ATCC 204508 / S288c) (Baker's yeast).